The chain runs to 168 residues: ATP synthase subunit b (168 aa).

A helical membrane pass occupies residues 9–29; sequence AIPFGTIAYTLFIFLILLVML.

Belongs to the ATPase B chain family. As to quaternary structure, F-type ATPases have 2 components, F(1) - the catalytic core - and F(0) - the membrane proton channel. F(1) has five subunits: alpha(3), beta(3), gamma(1), delta(1), epsilon(1). F(0) has three main subunits: a(1), b(2) and c(10-14). The alpha and beta chains form an alternating ring which encloses part of the gamma chain. F(1) is attached to F(0) by a central stalk formed by the gamma and epsilon chains, while a peripheral stalk is formed by the delta and b chains.

The protein localises to the cell membrane. Functionally, f(1)F(0) ATP synthase produces ATP from ADP in the presence of a proton or sodium gradient. F-type ATPases consist of two structural domains, F(1) containing the extramembraneous catalytic core and F(0) containing the membrane proton channel, linked together by a central stalk and a peripheral stalk. During catalysis, ATP synthesis in the catalytic domain of F(1) is coupled via a rotary mechanism of the central stalk subunits to proton translocation. In terms of biological role, component of the F(0) channel, it forms part of the peripheral stalk, linking F(1) to F(0). This chain is ATP synthase subunit b, found in Bacillus cereus (strain G9842).